A 380-amino-acid polypeptide reads, in one-letter code: ATP phosphoribosyltransferase regulatory subunit (380 aa).

Belongs to the class-II aminoacyl-tRNA synthetase family. HisZ subfamily. In terms of assembly, heteromultimer composed of HisG and HisZ subunits.

The protein resides in the cytoplasm. Its pathway is amino-acid biosynthesis; L-histidine biosynthesis; L-histidine from 5-phospho-alpha-D-ribose 1-diphosphate: step 1/9. Required for the first step of histidine biosynthesis. May allow the feedback regulation of ATP phosphoribosyltransferase activity by histidine. The polypeptide is ATP phosphoribosyltransferase regulatory subunit (Thermoanaerobacter sp. (strain X514)).